Here is a 364-residue protein sequence, read N- to C-terminus: Paraneoplastic antigen Ma2 homolog (364 aa).

Residue Ala-2 is modified to N-acetylalanine. Residues 335–353 (EEEEASFENESIEEPEEGD) are compositionally biased toward acidic residues. The segment at 335-364 (EEEEASFENESIEEPEEGDGYGRWNHEGDD) is disordered.

This sequence belongs to the PNMA family.

Its subcellular location is the nucleus. It is found in the nucleolus. In Pongo abelii (Sumatran orangutan), this protein is Paraneoplastic antigen Ma2 homolog (PNMA2).